Consider the following 152-residue polypeptide: Ribosome maturation factor RimP (152 aa).

Belongs to the RimP family.

The protein resides in the cytoplasm. Required for maturation of 30S ribosomal subunits. The protein is Ribosome maturation factor RimP of Pseudothermotoga lettingae (strain ATCC BAA-301 / DSM 14385 / NBRC 107922 / TMO) (Thermotoga lettingae).